The chain runs to 331 residues: Hydroxyacylglutathione hydrolase 1, mitochondrial (331 aa).

Residues 1–76 (MPVISKASST…HFCSISNMPS (76 aa)) constitute a mitochondrion transit peptide. H131 and H133 together coordinate Zn(2+). Residues D135 and H136 each contribute to the Fe cation site. Residues H189 and D208 each coordinate Zn(2+). Fe cation is bound at residue D208. 246-248 (REN) serves as a coordination point for substrate.

It belongs to the metallo-beta-lactamase superfamily. Glyoxalase II family. The cofactor is Fe(2+). Requires Fe(3+) as cofactor. It depends on Zn(2+) as a cofactor. As to expression, mainly expressed in roots, flowers and flower buds. Also detected in leaves.

The protein resides in the mitochondrion. It carries out the reaction an S-(2-hydroxyacyl)glutathione + H2O = a 2-hydroxy carboxylate + glutathione + H(+). It functions in the pathway secondary metabolite metabolism; methylglyoxal degradation; (R)-lactate from methylglyoxal: step 2/2. Its function is as follows. Thiolesterase that catalyzes the hydrolysis of S-D-lactoyl-glutathione to form glutathione and D-lactic acid. This is Hydroxyacylglutathione hydrolase 1, mitochondrial (GLX2-1) from Arabidopsis thaliana (Mouse-ear cress).